Reading from the N-terminus, the 245-residue chain is Lytic switch protein BZLF1 (245 aa).

The tract at residues 1–167 is transactivation; the sequence is MMDPNSTSED…RTRKPLQPES (167 aa). A phosphothreonine mark is found at T14 and T159. Residues 145–167 are disordered; it reads GAPQPAPAAAPARRTRKPLQPES. A Bipartite nuclear localization signal motif is present at residues 157–194; it reads RRTRKPLQPESLEECDSELEIKRYKNRVASRKCRAKFK. Residues S167, S173, and S186 each carry the phosphoserine modification. The basic motif stretch occupies residues 178–195; the sequence is KRYKNRVASRKCRAKFKH. The bZIP domain occupies 178–228; the sequence is KRYKNRVASRKCRAKFKHLLQHYREVASAKSSENDRLRLLLKQMCPSLDVD. The leucine-zipper stretch occupies residues 196 to 228; sequence LLQHYREVASAKSSENDRLRLLLKQMCPSLDVD. The accessory activation domain stretch occupies residues 229 to 245; the sequence is SIIPRTPDVLHEDLLNF.

Belongs to the bZIP family. In terms of assembly, homodimer. Interacts (via b-ZIP domain) with the DNA polymerase processivity factor BMRF1 (via N-terminus); this interaction may inhibit BZLF1-induced transcription of the BMRF1 promoter. Interacts with human UBN1, CRTC2 and RACK1. Interacts (via N-terminus) with human PAX5 (via N-terminus); this interaction inhibits BZLF1-mediated lytic viral reactivation. Interacts (via leucine-zipper domain) with host CEBPA; this interaction induces G1 host cell cycle arrest. Interacts (via C-terminus) with host TP53BP1 (via C-terminus); this interaction is involved in the activation of the viral lytic cycle. Interacts with host chromatin-remodeling ATPase INO80; this interaction participates to the activation of early lytic viral genes by BZLF1. Interacts with host regulator of chromatin SMARCA5/hSNF2H; this interaction participates to the activation of early lytic viral genes by BZLF1. Interacts with host PLSCR1/Phospholipid scramblase 1; this interaction negatively regulates the transcriptional regulatory activity of BZLF1 by preventing the formation of the BZLF1-CBP complex.

The protein localises to the host nucleus. Transcription factor that acts as a molecular switch to induce the transition from the latent to the lytic or productive phase of the virus cycle. Mediates the switch from the latent to the lytic cycle of infection in cells containing a highly methylated viral genome. Probably binds to silenced chromatin and recruits host chromatin-remodeling enzymes. Regulates this switch by binding to 2 types of ZEBRA response elements (ZREs): the CpG-free AP-1 like elements (latency) and the methylated CpG-containing elements (lytic replication). Activates preferentially the methylated forms of the viral lytic R (BRLF1) and Na (BRRF1) gene promoters, the latters being the first genes activated during Z-mediated reactivation in latently infected cells. BZLF1 and BRLF1 act together to trigger lytic replication. Also binds the lytic origin of replication, oriLyt. Induces G1 cell cycle arrest by stabilizing the host CCAAT/enhancer binding protein CEBPA. This function is important because the lytic cycle preferentially takes place in host cells arrested in G1. This chain is Lytic switch protein BZLF1, found in Homo sapiens (Human).